A 475-amino-acid polypeptide reads, in one-letter code: Tetratricopeptide repeat protein 29 (475 aa).

TPR repeat units lie at residues 92–131 (DALREAARVRSLFWLQKPLEEQPDKLDYLYHYLTRAEDAE), 136–173 (FEDVHNNLYALACYFNNSEDKWVRNHFYERCFKIAQLI), 182–215 (AEAHMHMGLLYEEDGQLLEAAEHYEAFHQLTQGR), 234–267 (LRTYRLLSDKMLENKEYKQAIKILIKASEIAKEG), 274–307 (AEASYYLGLAHLAAEEYETALTVLDTYCKISTDL), 314–347 (GRGYEAIAKVLQSQGEMTEAIKYLKKFVKIARNN), and 354–387 (VRASTMLGDIYNEKGYYNKASECFQQAFDTTVEL). Residues 437 to 475 (IEPDPVTEEFRGSTVEAVSQNSERLEELSRFPGDQKNET) are disordered. Residues 459-475 (ERLEELSRFPGDQKNET) are compositionally biased toward basic and acidic residues.

In terms of tissue distribution, expressed in spermatozoa (at protein level).

It localises to the cytoplasm. Its subcellular location is the cytoskeleton. It is found in the flagellum axoneme. In terms of biological role, axonemal protein which is implicated in axonemal and/or peri-axonemal structure assembly and regulates flagellum assembly and beating and therefore sperm motility. This is Tetratricopeptide repeat protein 29 (TTC29) from Homo sapiens (Human).